Reading from the N-terminus, the 56-residue chain is Preprotein translocase subunit SecG (56 aa).

Residues 1–29 lie on the Cytoplasmic side of the membrane; sequence MAKEKATLPPTGAGLMRFFDEDTRAVKVS. Residues 30–49 form a helical membrane-spanning segment; that stretch reads PKGVIALTLLLIAFEFILHM. The Extracellular portion of the chain corresponds to 50–56; the sequence is FGSSIFG.

The protein belongs to the SEC61-beta family. In terms of assembly, component of the protein translocase complex. Heterotrimer consisting of alpha (SecY), beta (SecG) and gamma (SecE) subunits. Can form oligomers of the heterotrimer.

The protein resides in the cell membrane. In terms of biological role, involved in protein export. The function of the beta subunit is unknown, but it may be involved in stabilization of the trimeric complex. The protein is Preprotein translocase subunit SecG of Thermococcus kodakarensis (strain ATCC BAA-918 / JCM 12380 / KOD1) (Pyrococcus kodakaraensis (strain KOD1)).